A 132-amino-acid chain; its full sequence is D-ribose pyranase (132 aa).

Histidine 20 acts as the Proton donor in catalysis. Residues aspartate 28, histidine 99, and 121–123 (YSN) each bind substrate.

Belongs to the RbsD / FucU family. RbsD subfamily. As to quaternary structure, homodecamer.

Its subcellular location is the cytoplasm. It catalyses the reaction beta-D-ribopyranose = beta-D-ribofuranose. Its pathway is carbohydrate metabolism; D-ribose degradation; D-ribose 5-phosphate from beta-D-ribopyranose: step 1/2. Catalyzes the interconversion of beta-pyran and beta-furan forms of D-ribose. This Lactococcus lactis subsp. lactis (strain IL1403) (Streptococcus lactis) protein is D-ribose pyranase.